An 854-amino-acid polypeptide reads, in one-letter code: DNA gyrase subunit A (854 aa).

Residues 42-510 form the Topo IIA-type catalytic domain; that stretch reads LPEVRDGLKP…ADGQVSDEDL (469 aa). The active-site O-(5'-phospho-DNA)-tyrosine intermediate is Tyr129. The GyrA-box motif lies at 537 to 543; that stretch reads QKRGGKG.

It belongs to the type II topoisomerase GyrA/ParC subunit family. In terms of assembly, heterotetramer, composed of two GyrA and two GyrB chains. In the heterotetramer, GyrA contains the active site tyrosine that forms a transient covalent intermediate with DNA, while GyrB binds cofactors and catalyzes ATP hydrolysis.

It localises to the cytoplasm. It catalyses the reaction ATP-dependent breakage, passage and rejoining of double-stranded DNA.. Its activity is regulated as follows. DNA supercoiling is inhibited by the coumarin antibiotic novobiocin. Also inhibited by the fluoroquinolones ciprofloxacin and moxifloxacin. Functionally, a type II topoisomerase that negatively supercoils closed circular double-stranded (ds) DNA in an ATP-dependent manner to modulate DNA topology and maintain chromosomes in an underwound state; also catalyzes the interconversion of other topological isomers of double-stranded DNA rings, including catenanes. At comparable concentrations has a stronger decatenation activity than E.coli, which is inhibited by ciprofloxacin and novobiocin. Cleaves dsDNA at the sequence 5'-AT/GGCC-3', leaving a 4 base overhang. Relaxes negatively supercoiled DNA in an ATP-independent manner. In terms of biological role, negative supercoiling favors strand separation, and DNA replication, transcription, recombination and repair, all of which involve strand separation. Type II topoisomerases break and join 2 DNA strands simultaneously in an ATP-dependent manner. The sequence is that of DNA gyrase subunit A from Mycolicibacterium smegmatis (Mycobacterium smegmatis).